The chain runs to 318 residues: Olfactory receptor 13C5 (318 aa).

Over 1–25 (MEWENHTILVEFFLKGLSGHPRLEL) the chain is Extracellular. N5 carries N-linked (GlcNAc...) asparagine glycosylation. The chain crosses the membrane as a helical span at residues 26-46 (LFFVLIFIMYVVILLGNGTLI). The Cytoplasmic portion of the chain corresponds to 47–54 (LISILDPH). Residues 55-75 (LHTPMYFFLGNLSFLDICYTT) traverse the membrane as a helical segment. Residues 76–99 (TSIPSTLVSFLSERKTISLSGCAV) are Extracellular-facing. C97 and C189 are disulfide-bonded. The chain crosses the membrane as a helical span at residues 100 to 120 (QMFLSLAMGTTECVLLGVMAF). At 121–139 (DRYVAICNPLRYPIIMSKD) the chain is on the cytoplasmic side. Residues 140-160 (AYVPMAAGSWIIGAVNSAVQT) traverse the membrane as a helical segment. Over 161-197 (VFVVQLPFCRNNIINHFTCEILAVMKLACADISGNEF) the chain is Extracellular. Residues 198-217 (ILLVTTTLFLLTPLLLIIVS) traverse the membrane as a helical segment. Topologically, residues 218–237 (YTLIILSIFKISSSEGRSKP) are cytoplasmic. A helical membrane pass occupies residues 238–258 (SSTCSARLTVVITFCGTIFLM). Residues 259-277 (YMKPKSQETLNSDDLDATD) lie on the Extracellular side of the membrane. A helical membrane pass occupies residues 278–298 (KLIFIFYRVMTPMMNPLIYSL). Residues 299-318 (RNKDVKEAVKHLLRRKNFNK) lie on the Cytoplasmic side of the membrane.

The protein belongs to the G-protein coupled receptor 1 family.

Its subcellular location is the cell membrane. Functionally, odorant receptor. In Homo sapiens (Human), this protein is Olfactory receptor 13C5 (OR13C5).